A 296-amino-acid polypeptide reads, in one-letter code: Small ribosomal subunit biogenesis GTPase RsgA (296 aa).

The CP-type G domain maps to 65-223 (INRIGRPAVA…LADTPGFSSI (159 aa)). GTP contacts are provided by residues 114-117 (SKAD) and 166-174 (GQSGAGKST). Residues Cys-247, Cys-252, His-254, and Cys-260 each coordinate Zn(2+).

It belongs to the TRAFAC class YlqF/YawG GTPase family. RsgA subfamily. In terms of assembly, monomer. Associates with 30S ribosomal subunit, binds 16S rRNA. The cofactor is Zn(2+).

The protein resides in the cytoplasm. One of several proteins that assist in the late maturation steps of the functional core of the 30S ribosomal subunit. Helps release RbfA from mature subunits. May play a role in the assembly of ribosomal proteins into the subunit. Circularly permuted GTPase that catalyzes slow GTP hydrolysis, GTPase activity is stimulated by the 30S ribosomal subunit. This Lactobacillus acidophilus (strain ATCC 700396 / NCK56 / N2 / NCFM) protein is Small ribosomal subunit biogenesis GTPase RsgA.